Here is a 460-residue protein sequence, read N- to C-terminus: MAANVQTSSLLFLVFLLLQNFYSANSQSFLGVNYGQLSDNLPSLQATVNLLKSTTIQKVRLFGAEPAVIKAFANTGVEIVIGFDNGDIPTLASNPNVASQFVKSNVMSFYPASNIIAITVGNEVLTSGDQKLISQLLPAMQNVQNALNAASLGGKVKVSTVHAMAVLSQSYPPSSGVFNPGLGDTMKALLQFQSANDAPFMISPYPYFAYKNQPTPDTLAFCLFQPNAGQVDSGNGHKYTNMFDAQVDAVHSALNAMGFKDIEIVVAETGWPHGGDSNEVGPSLDNAKAYVGNLINHLKSKVGTPLMPGKSIDTYLFSLYDEDKKTGASSEKYFGLFKPDGSTTYDVGLLKNTQNPTTPATPTPTPKAAGSWCVPKPGVSDDQLTGNINYACGQGIDCGPIQPGGACFEPNTVKAHAAYVMNLYYQSAGRNSWNCDFSQTATLTNTNPSYGACNFPSGSN.

The signal sequence occupies residues methionine 1–serine 26. Residue glutamate 123 is the Proton donor of the active site. The active-site Nucleophile is glutamate 268. Positions asparagine 352 to serine 371 are disordered. An N-linked (GlcNAc...) asparagine glycan is attached at asparagine 355. Residues cysteine 373 and cysteine 435 are joined by a disulfide bond. Residue asparagine 447 is glycosylated (N-linked (GlcNAc...) asparagine).

Belongs to the glycosyl hydrolase 17 family. As to quaternary structure, homodimer. In terms of processing, glycosylated. Post-translationally, contains two additional disulfide bonds, but it is unclear if they are between the pairs Cys-392-Cys-398 and Cys-407-Cys-453 (PudMed:18096638) or between the pairs Cys-392-Cys-453 and Cys-398-Cys-407 (PudMed:12392450). Expressed only in pollen.

It localises to the secreted. The catalysed reaction is Hydrolysis of (1-&gt;3)-beta-D-glucosidic linkages in (1-&gt;3)-beta-D-glucans.. In Olea europaea (Common olive), this protein is Glucan endo-1,3-beta-D-glucosidase (OLE9).